The primary structure comprises 75 residues: UPF0352 protein ESA_01049 (75 aa).

The protein belongs to the UPF0352 family.

The protein is UPF0352 protein ESA_01049 of Cronobacter sakazakii (strain ATCC BAA-894) (Enterobacter sakazakii).